Here is a 435-residue protein sequence, read N- to C-terminus: Transcriptional enhancer factor TEF-5 (435 aa).

The segment covering 1–12 (MASNSWNASSSP) has biased composition (polar residues). The tract at residues 1 to 34 (MASNSWNASSSPGEAREDGPEGLDKGLDNDAEGV) is disordered. Ala-2 is modified (N-acetylalanine). The span at 14–28 (EAREDGPEGLDKGLD) shows a compositional bias: basic and acidic residues. Positions 28-104 (DNDAEGVWSP…QVLARKKVRE (77 aa)) form a DNA-binding region, TEA. Ser-148 is subject to Phosphoserine. The transcriptional activation stretch occupies residues 173–435 (GPSQDIKPFA…QHHVYKLVKD (263 aa)).

In terms of assembly, interacts with YAP1 and WWTR1/TAZ. Preferentially expressed in the placenta.

It localises to the nucleus. Its function is as follows. Transcription factor which plays a key role in the Hippo signaling pathway, a pathway involved in organ size control and tumor suppression by restricting proliferation and promoting apoptosis. The core of this pathway is composed of a kinase cascade wherein MST1/MST2, in complex with its regulatory protein SAV1, phosphorylates and activates LATS1/2 in complex with its regulatory protein MOB1, which in turn phosphorylates and inactivates YAP1 oncoprotein and WWTR1/TAZ. Acts by mediating gene expression of YAP1 and WWTR1/TAZ, thereby regulating cell proliferation, migration and epithelial mesenchymal transition (EMT) induction. Binds to multiple functional elements of the human chorionic somatomammotropin-B gene enhancer. The protein is Transcriptional enhancer factor TEF-5 (TEAD3) of Homo sapiens (Human).